The chain runs to 259 residues: Thiazole synthase (259 aa).

The active-site Schiff-base intermediate with DXP is Lys102. Residues Gly163, 189–190 (AG), and 211–212 (NT) contribute to the 1-deoxy-D-xylulose 5-phosphate site.

It belongs to the ThiG family. As to quaternary structure, homotetramer. Forms heterodimers with either ThiH or ThiS.

It localises to the cytoplasm. The enzyme catalyses [ThiS sulfur-carrier protein]-C-terminal-Gly-aminoethanethioate + 2-iminoacetate + 1-deoxy-D-xylulose 5-phosphate = [ThiS sulfur-carrier protein]-C-terminal Gly-Gly + 2-[(2R,5Z)-2-carboxy-4-methylthiazol-5(2H)-ylidene]ethyl phosphate + 2 H2O + H(+). It functions in the pathway cofactor biosynthesis; thiamine diphosphate biosynthesis. Functionally, catalyzes the rearrangement of 1-deoxy-D-xylulose 5-phosphate (DXP) to produce the thiazole phosphate moiety of thiamine. Sulfur is provided by the thiocarboxylate moiety of the carrier protein ThiS. In vitro, sulfur can be provided by H(2)S. The chain is Thiazole synthase from Novosphingobium aromaticivorans (strain ATCC 700278 / DSM 12444 / CCUG 56034 / CIP 105152 / NBRC 16084 / F199).